A 221-amino-acid chain; its full sequence is UPF0758 protein KPN78578_39390 (221 aa).

The region spanning 99–221 is the MPN domain; the sequence is ALVTPSMTRE…YVSFAERGWI (123 aa). Zn(2+) is bound by residues histidine 170, histidine 172, and aspartate 183. The short motif at 170-183 is the JAMM motif element; sequence HNHPSGSPEPSQAD.

This sequence belongs to the UPF0758 family. YicR subfamily.

The protein is UPF0758 protein KPN78578_39390 of Klebsiella pneumoniae subsp. pneumoniae (strain ATCC 700721 / MGH 78578).